The primary structure comprises 167 residues: MSDESKPIEEPPIESKPQEEQDTEKESLTNSEESKKRAVEPSTDKKKKRRRRNYDEEDKELEKEEAKEKNAKTENNEEGDDDEDDEDDDYEQGKLEDEEEEEDELLEIDESNIITTGRRTRGKVIDFTKAAEELDKERGVVAEEDEEEEEEEEKENEDDDFKEQVQN.

Disordered regions lie at residues 1 to 116 (MSDE…IITT) and 131 to 167 (AEEL…QVQN). Basic and acidic residues-rich tracts occupy residues 16–44 (KPQE…PSTD) and 60–75 (ELEK…KTEN). Acidic residues predominate over residues 76–110 (NEEGDDDEDDEDDDYEQGKLEDEEEEEDELLEIDE). Over residues 131–141 (AEELDKERGVV) the composition is skewed to basic and acidic residues. Residues 142–161 (AEEDEEEEEEEEKENEDDDF) show a composition bias toward acidic residues.

The protein belongs to the CHZ1 family. In terms of assembly, forms a heterotrimer with H2A.Z-H2B, stabilizing the association of the histone dimer. Also, with a lower affinity, forms a heterotrimer with H2A-H2B.

Its subcellular location is the nucleus. Forms a chaperone-bound H2A.Z-H2B complex that acts as a source for SWR1 complex-dependent H2A to H2A.Z histone replacement in chromatin. The protein is Histone H2A.Z-specific chaperone CHZ1 (CHZ1) of Candida albicans (strain SC5314 / ATCC MYA-2876) (Yeast).